Reading from the N-terminus, the 168-residue chain is Large ribosomal subunit protein uL29c (168 aa).

A disordered region spans residues 1–20; sequence MLAIHSLSSTPCSSGLTSPP. A chloroplast-targeting transit peptide spans 1-58; it reads MLAIHSLSSTPCSSGLTSPPKSTLLTKSSFHGLRLPSVNLSSSLRLRVQTPPSSVVVM.

As to quaternary structure, component of the chloroplast large ribosomal subunit (LSU). Mature 70S chloroplast ribosomes of higher plants consist of a small (30S) and a large (50S) subunit. The 30S small subunit contains 1 molecule of ribosomal RNA (16S rRNA) and 24 different proteins. The 50S large subunit contains 3 rRNA molecules (23S, 5S and 4.5S rRNA) and 33 different proteins.

It is found in the plastid. The protein localises to the chloroplast. Functionally, component of the chloroplast ribosome (chloro-ribosome), a dedicated translation machinery responsible for the synthesis of chloroplast genome-encoded proteins, including proteins of the transcription and translation machinery and components of the photosynthetic apparatus. The polypeptide is Large ribosomal subunit protein uL29c (RPL29) (Spinacia oleracea (Spinach)).